Here is a 505-residue protein sequence, read N- to C-terminus: Aminoaldehyde dehydrogenase 1a (505 aa).

D101 provides a ligand contact to Na(+). NAD(+)-binding positions include 161–163 (TPW) and 187–190 (KPSE). L191 lines the Na(+) pocket. NAD(+) is bound by residues 241–244 (SFET) and E262. The Proton acceptor role is filled by E262. C296 acts as the Nucleophile in catalysis. Residues E395 and W461 each contribute to the NAD(+) site.

Belongs to the aldehyde dehydrogenase family. As to quaternary structure, forms homodimers.

The enzyme catalyses 4-aminobutanal + NAD(+) + H2O = 4-aminobutanoate + NADH + 2 H(+). It catalyses the reaction 3-aminopropanal + NAD(+) + H2O = beta-alanine + NADH + 2 H(+). The catalysed reaction is 4-(trimethylamino)butanal + NAD(+) + H2O = 4-(trimethylamino)butanoate + NADH + 2 H(+). It carries out the reaction 4-guanidinobutanal + NAD(+) + H2O = 4-guanidinobutanoate + NADH + 2 H(+). The enzyme catalyses betaine aldehyde + NAD(+) + H2O = glycine betaine + NADH + 2 H(+). The protein operates within amine and polyamine biosynthesis; betaine biosynthesis via choline pathway; betaine from betaine aldehyde: step 1/1. In terms of biological role, dehydrogenase that catalyzes the oxidation of several aminoaldehydes. Metabolizes and detoxifies aldehyde products of polyamine degradation to non-toxic amino acids. Catalyzes the oxidation of 4-aminobutanal and 3-aminopropanal to 4-aminobutanoate and beta-alanine, respectively. Catalyzes the oxidation of 4-(trimethylamino)butanal and 4-guanidinobutanal to 4-trimethylammoniobutanoate and 4-guanidinobutanoate, respectively. Catalyzes the oxidation of betaine aldehyde to glycine betaine. Functionally, dehydrogenase that catalyzes the oxidation of several aminoaldehydes. Catalyzes the oxidation of betaine aldehyde to glycine betaine. Catalyzes the oxidation of 4-(trimethylamino)butanal to 4-trimethylammoniobutanoate. This Zea mays (Maize) protein is Aminoaldehyde dehydrogenase 1a.